Reading from the N-terminus, the 276-residue chain is Formamidopyrimidine-DNA glycosylase (276 aa).

The active-site Schiff-base intermediate with DNA is the Pro2. The Proton donor role is filled by Glu3. Catalysis depends on Lys58, which acts as the Proton donor; for beta-elimination activity. DNA is bound by residues His94, Arg112, and Arg157. An FPG-type zinc finger spans residues 242–276; that stretch reads FVYDRAGLPCRVCGTPIKQIVQGQRSTYFCPTCQR. Catalysis depends on Arg266, which acts as the Proton donor; for delta-elimination activity.

It belongs to the FPG family. As to quaternary structure, monomer. The cofactor is Zn(2+).

It catalyses the reaction Hydrolysis of DNA containing ring-opened 7-methylguanine residues, releasing 2,6-diamino-4-hydroxy-5-(N-methyl)formamidopyrimidine.. It carries out the reaction 2'-deoxyribonucleotide-(2'-deoxyribose 5'-phosphate)-2'-deoxyribonucleotide-DNA = a 3'-end 2'-deoxyribonucleotide-(2,3-dehydro-2,3-deoxyribose 5'-phosphate)-DNA + a 5'-end 5'-phospho-2'-deoxyribonucleoside-DNA + H(+). Functionally, involved in base excision repair of DNA damaged by oxidation or by mutagenic agents. Acts as a DNA glycosylase that recognizes and removes damaged bases. Has a preference for oxidized purines, such as 7,8-dihydro-8-oxoguanine (8-oxoG). Has AP (apurinic/apyrimidinic) lyase activity and introduces nicks in the DNA strand. Cleaves the DNA backbone by beta-delta elimination to generate a single-strand break at the site of the removed base with both 3'- and 5'-phosphates. This Paraburkholderia phytofirmans (strain DSM 17436 / LMG 22146 / PsJN) (Burkholderia phytofirmans) protein is Formamidopyrimidine-DNA glycosylase.